We begin with the raw amino-acid sequence, 183 residues long: Cell division protein ZapC (183 aa).

This sequence belongs to the ZapC family. In terms of assembly, interacts directly with FtsZ.

Its subcellular location is the cytoplasm. Contributes to the efficiency of the cell division process by stabilizing the polymeric form of the cell division protein FtsZ. Acts by promoting interactions between FtsZ protofilaments and suppressing the GTPase activity of FtsZ. The sequence is that of Cell division protein ZapC from Proteus mirabilis (strain HI4320).